Reading from the N-terminus, the 215-residue chain is uncharacterized protein (215 aa).

To T.pallidum TP_0127, TP_0618 and TP_0619.

This is an uncharacterized protein from Treponema pallidum (strain Nichols).